The chain runs to 257 residues: Transmembrane protein C257L (257 aa).

A run of 2 helical transmembrane segments spans residues 123–143 and 163–183; these read LELLGYSPTPIIGGDFMFTAL and MMIFFLIILLCVILGIFYVLV.

This sequence belongs to the asfivirus C257R family.

The protein resides in the host membrane. Its subcellular location is the virion. The chain is Transmembrane protein C257L from African swine fever virus (isolate Tick/South Africa/Pretoriuskop Pr4/1996) (ASFV).